The primary structure comprises 321 residues: GTP 3',8-cyclase (321 aa).

Residues 5–233 (SFNRVIDYIR…QGSSKIYTLE (229 aa)) enclose the Radical SAM core domain. Position 14 (R14) interacts with GTP. Positions 21 and 25 each coordinate [4Fe-4S] cluster. Y27 serves as a coordination point for S-adenosyl-L-methionine. Residue C28 participates in [4Fe-4S] cluster binding. R64 contributes to the GTP binding site. An S-adenosyl-L-methionine-binding site is contributed by G68. Residue S95 participates in GTP binding. S119 provides a ligand contact to S-adenosyl-L-methionine. K155 serves as a coordination point for GTP. M189 lines the S-adenosyl-L-methionine pocket. Positions 249 and 252 each coordinate [4Fe-4S] cluster. 254–256 (RIR) serves as a coordination point for GTP. C266 serves as a coordination point for [4Fe-4S] cluster.

The protein belongs to the radical SAM superfamily. MoaA family. Monomer and homodimer. [4Fe-4S] cluster is required as a cofactor.

It catalyses the reaction GTP + AH2 + S-adenosyl-L-methionine = (8S)-3',8-cyclo-7,8-dihydroguanosine 5'-triphosphate + 5'-deoxyadenosine + L-methionine + A + H(+). It participates in cofactor biosynthesis; molybdopterin biosynthesis. In terms of biological role, catalyzes the cyclization of GTP to (8S)-3',8-cyclo-7,8-dihydroguanosine 5'-triphosphate. The chain is GTP 3',8-cyclase from Helicobacter pylori (strain J99 / ATCC 700824) (Campylobacter pylori J99).